A 302-amino-acid polypeptide reads, in one-letter code: uncharacterized protein (302 aa).

An N-terminal signal peptide occupies residues 1–52 (MLKKLKVVRLLVNHLIYCPSIFMPYSKNMKKKIWNKTSLGALFMLFGTALTA).

Belongs to the MG439/MG440 family.

This is an uncharacterized protein from Mycoplasma pneumoniae (strain ATCC 29342 / M129 / Subtype 1) (Mycoplasmoides pneumoniae).